The following is a 585-amino-acid chain: SLAIN motif-containing protein-like (585 aa).

5 disordered regions span residues 1–34 (MVVP…PNLT), 55–125 (NQTL…RVEE), 324–365 (QDYA…EDEC), 402–476 (PRLS…SDGQ), and 492–585 (GSMS…DGCY). The span at 68–83 (GGTNNSNLKAGSNINN) shows a compositional bias: polar residues. The segment covering 327 to 345 (ASTSASRRSSSASLQSLRR) has biased composition (low complexity). Over residues 351-365 (QEFDSYSQEDEEDEC) the composition is skewed to acidic residues. Polar residues-rich tracts occupy residues 425–434 (PNLTPRTSLR), 441–476 (NSRS…SDGQ), and 549–563 (ASPS…TPRS). A compositionally biased stretch (basic and acidic residues) spans 575–585 (LTDESWKDGCY).

The protein belongs to the SLAIN motif-containing family.

The polypeptide is SLAIN motif-containing protein-like (Danio rerio (Zebrafish)).